The following is a 69-amino-acid chain: Sec-independent protein translocase protein TatA (69 aa).

The helical transmembrane segment at 1–21 (MFGKLGMPELVLIFAVALVIF) threads the bilayer.

It belongs to the TatA/E family. In terms of assembly, forms a complex with TatC.

Its subcellular location is the cell membrane. Part of the twin-arginine translocation (Tat) system that transports large folded proteins containing a characteristic twin-arginine motif in their signal peptide across membranes. TatA could form the protein-conducting channel of the Tat system. This is Sec-independent protein translocase protein TatA from Alkaliphilus metalliredigens (strain QYMF).